The following is a 273-amino-acid chain: Putative pyruvate, phosphate dikinase regulatory protein (273 aa).

G149–T156 contributes to the ADP binding site.

Belongs to the pyruvate, phosphate/water dikinase regulatory protein family. PDRP subfamily.

It catalyses the reaction N(tele)-phospho-L-histidyl/L-threonyl-[pyruvate, phosphate dikinase] + ADP = N(tele)-phospho-L-histidyl/O-phospho-L-threonyl-[pyruvate, phosphate dikinase] + AMP + H(+). The enzyme catalyses N(tele)-phospho-L-histidyl/O-phospho-L-threonyl-[pyruvate, phosphate dikinase] + phosphate + H(+) = N(tele)-phospho-L-histidyl/L-threonyl-[pyruvate, phosphate dikinase] + diphosphate. Its function is as follows. Bifunctional serine/threonine kinase and phosphorylase involved in the regulation of the pyruvate, phosphate dikinase (PPDK) by catalyzing its phosphorylation/dephosphorylation. The sequence is that of Putative pyruvate, phosphate dikinase regulatory protein from Rickettsia prowazekii (strain Madrid E).